The following is a 262-amino-acid chain: Type II pantothenate kinase (262 aa).

ATP is bound at residue 7 to 14 (DAGGSLVK). Glu71 functions as the Proton acceptor in the catalytic mechanism. ATP-binding positions include Thr101, 119–123 (GGLLT), and Tyr135.

Belongs to the type II pantothenate kinase family. As to quaternary structure, homodimer.

Its subcellular location is the cytoplasm. It catalyses the reaction (R)-pantothenate + ATP = (R)-4'-phosphopantothenate + ADP + H(+). It functions in the pathway cofactor biosynthesis; coenzyme A biosynthesis; CoA from (R)-pantothenate: step 1/5. Its function is as follows. Catalyzes the phosphorylation of pantothenate (Pan), the first step in CoA biosynthesis. In Oceanobacillus iheyensis (strain DSM 14371 / CIP 107618 / JCM 11309 / KCTC 3954 / HTE831), this protein is Type II pantothenate kinase.